The following is a 92-amino-acid chain: Small ribosomal subunit protein uS19c (92 aa).

The protein belongs to the universal ribosomal protein uS19 family.

Its subcellular location is the plastid. The protein localises to the chloroplast. Protein S19 forms a complex with S13 that binds strongly to the 16S ribosomal RNA. This is Small ribosomal subunit protein uS19c from Manihot esculenta (Cassava).